A 307-amino-acid chain; its full sequence is Homoserine O-acetyltransferase (307 aa).

The active-site Acyl-thioester intermediate is Cys142. Lys163 and Ser192 together coordinate substrate. His235 acts as the Proton acceptor in catalysis. The active site involves Glu237. Arg249 lines the substrate pocket.

Belongs to the MetA family.

It localises to the cytoplasm. The catalysed reaction is L-homoserine + acetyl-CoA = O-acetyl-L-homoserine + CoA. It functions in the pathway amino-acid biosynthesis; L-methionine biosynthesis via de novo pathway; O-acetyl-L-homoserine from L-homoserine: step 1/1. Its function is as follows. Transfers an acetyl group from acetyl-CoA to L-homoserine, forming acetyl-L-homoserine. The chain is Homoserine O-acetyltransferase from Sinorhizobium fredii (strain NBRC 101917 / NGR234).